Consider the following 545-residue polypeptide: Labda-7,13-dienyl diphosphate synthase (545 aa).

Residues 315–320 (DADDTA) carry the DXDDTA motif motif. An RXXDGSW motif motif is present at residues 444–450 (RRTDGSW). Positions 526–545 (LPAPAPVPPGFDAARTGPAD) are disordered.

It belongs to the terpene synthase family. It depends on Mg(2+) as a cofactor.

The enzyme catalyses (2E,6E,10E)-geranylgeranyl diphosphate = (13E)-labda-7,13-dien-15-yl diphosphate. In terms of biological role, involved in the biosynthesis of the labdane-type bicyclic diterpene labda-7,13(16),14-triene. Catalyzes the conversion of geranylgeranyl diphosphate (GGDP) into labda-7,13(E)-dienyl diphosphate. This is Labda-7,13-dienyl diphosphate synthase from Streptomyces clavuligerus.